A 197-amino-acid polypeptide reads, in one-letter code: Xanthine phosphoribosyltransferase (197 aa).

Residues Leu20 and Asn27 each coordinate xanthine. 128–132 (ANGQA) is a binding site for 5-phospho-alpha-D-ribose 1-diphosphate. A xanthine-binding site is contributed by Lys156.

This sequence belongs to the purine/pyrimidine phosphoribosyltransferase family. Xpt subfamily. In terms of assembly, homodimer.

It localises to the cytoplasm. It catalyses the reaction XMP + diphosphate = xanthine + 5-phospho-alpha-D-ribose 1-diphosphate. The protein operates within purine metabolism; XMP biosynthesis via salvage pathway; XMP from xanthine: step 1/1. Converts the preformed base xanthine, a product of nucleic acid breakdown, to xanthosine 5'-monophosphate (XMP), so it can be reused for RNA or DNA synthesis. In Bacillus cereus (strain G9842), this protein is Xanthine phosphoribosyltransferase.